Reading from the N-terminus, the 129-residue chain is RxLR effector protein PexRD43 (129 aa).

A signal peptide spans 1 to 16; it reads MRLAMILLSIPLFVSG. Positions 44-56 match the RxLR-dEER motif; sequence RSLRTSGEANEER.

The protein belongs to the RxLR effector family.

It is found in the secreted. The protein resides in the host cytoplasm. Its subcellular location is the host nucleus. Effector that enhances P.infestans colonization of Nicotiana benthamiana leaves. The protein is RxLR effector protein PexRD43 of Phytophthora infestans (strain T30-4) (Potato late blight agent).